The following is a 323-amino-acid chain: Aldo-keto reductase family 1 member C13 (323 aa).

Residues 20-24, Asp50, and Tyr55 contribute to the NAD(+) site; that span reads GFGTY. The active-site Proton donor is the Tyr55. His117 contributes to the substrate binding site. NAD(+)-binding positions include 166 to 167, Gln190, 216 to 224, and 270 to 280; these read SN, YGALGTQRY, and QSFKENEMREN.

This sequence belongs to the aldo/keto reductase family.

Its function is as follows. Catalyzes the dehydrogenation of 17-beta-hydroxysteroids. May also exhibit significant activity with a variety of cyclic and alicyclic alcohols. Uses both NAD and NADP, but the activity is much greater with NAD than with NADP. In Mus musculus (Mouse), this protein is Aldo-keto reductase family 1 member C13 (Akr1c13).